The sequence spans 204 residues: Ribosomal RNA small subunit methyltransferase G (204 aa).

S-adenosyl-L-methionine-binding residues include glycine 73, phenylalanine 78, and arginine 139.

This sequence belongs to the methyltransferase superfamily. RNA methyltransferase RsmG family.

Its subcellular location is the cytoplasm. The catalysed reaction is guanosine(527) in 16S rRNA + S-adenosyl-L-methionine = N(7)-methylguanosine(527) in 16S rRNA + S-adenosyl-L-homocysteine. Its function is as follows. Specifically methylates the N7 position of guanine in position 527 of 16S rRNA. The protein is Ribosomal RNA small subunit methyltransferase G of Coxiella burnetii (strain CbuG_Q212) (Coxiella burnetii (strain Q212)).